Here is a 620-residue protein sequence, read N- to C-terminus: Glutathione-regulated potassium-efflux system protein KefC (620 aa).

Helical transmembrane passes span 4–24 (HTLL…PIAV), 26–46 (LGLG…PWGL), 54–74 (SILH…GLEL), 90–110 (GALQ…FLGL), 114–134 (VAEL…MQAM), 149–169 (FAVL…IPLL), 178–198 (LGAF…VVLL), 218–238 (VFSA…EEVG), 270–290 (GLLL…GTLV), 294–314 (LRIL…LWLV), 327–347 (WFAV…GAAQ), and 359–379 (ALTL…VLLT). An RCK N-terminal domain is found at 399–518 (QPRVIVAGFG…AGVAMPERET (120 aa)). Residues 599–620 (QGTAEGKHSGEAADEPEVKPSI) form a disordered region.

It belongs to the monovalent cation:proton antiporter 2 (CPA2) transporter (TC 2.A.37) family. KefC subfamily. As to quaternary structure, homodimer. Interacts with the regulatory subunit KefF.

Its subcellular location is the cell inner membrane. Functionally, pore-forming subunit of a potassium efflux system that confers protection against electrophiles. Catalyzes K(+)/H(+) antiport. The sequence is that of Glutathione-regulated potassium-efflux system protein KefC from Salmonella dublin (strain CT_02021853).